A 1021-amino-acid polypeptide reads, in one-letter code: Transmembrane protein 132A (1021 aa).

The first 32 residues, 1–32 (MTERAAAAPRGPYGAWLCLLVALALEVVRVGS), serve as a signal peptide directing secretion. Residues 33-848 (NQNTLDPIYL…VTDLELGMYA (816 aa)) lie on the Extracellular side of the membrane. The disordered stretch occupies residues 207 to 226 (PAGEGPGGCGPGTEEEPKEQ). N-linked (GlcNAc...) asparagine glycosylation occurs at Asn-276. The segment at 606-913 (IEVRSPLSDS…QLDRCSSSSP (308 aa)) is binds to HSPA5/GRP78. A confers cellular localization similar to full-length form region spans residues 666–1021 (LPAPKQEVAL…NYMERIRGSS (356 aa)). The tract at residues 793–835 (AGDMGSHVGPGIRGKFERAEEEAGKEENEAKEEEEDEEEMVPA) is disordered. Residues 806-820 (GKFERAEEEAGKEEN) are compositionally biased toward basic and acidic residues. Acidic residues predominate over residues 821–832 (EAKEEEEDEEEM). A helical membrane pass occupies residues 849 to 869 (LLGIFCLAFLIFLVNGVVFVL). At 870 to 1021 (RYQRKEPPDS…NYMERIRGSS (152 aa)) the chain is on the cytoplasmic side. The segment at 903–955 (RQLDRCSSSSPPKGEGGCPCESGAGGDTSTVAPSASESPAGSTSTLARKEAGG) is disordered. Positions 929 to 948 (DTSTVAPSASESPAGSTSTL) are enriched in polar residues.

It belongs to the TMEM132 family. In terms of assembly, interacts with HSPA5/GRP78. Expressed in the brain in neuronal cells of the hypothalamus, thalamus, cerebral cortex, amygdala, and cerebellum.

It localises to the golgi apparatus membrane. The protein resides in the endoplasmic reticulum membrane. Its function is as follows. May play a role in embryonic and postnatal development of the brain. Increased resistance to cell death induced by serum starvation in cultured cells. Regulates cAMP-induced GFAP gene expression via STAT3 phosphorylation. The sequence is that of Transmembrane protein 132A (Tmem132a) from Rattus norvegicus (Rat).